The following is a 314-amino-acid chain: Lipoyl synthase (314 aa).

Positions 61, 66, 72, 87, 91, 94, and 301 each coordinate [4Fe-4S] cluster. In terms of domain architecture, Radical SAM core spans 73-290 (FGRGTATFMI…ERIATNLGFS (218 aa)).

It belongs to the radical SAM superfamily. Lipoyl synthase family. [4Fe-4S] cluster is required as a cofactor.

It is found in the cytoplasm. It catalyses the reaction [[Fe-S] cluster scaffold protein carrying a second [4Fe-4S](2+) cluster] + N(6)-octanoyl-L-lysyl-[protein] + 2 oxidized [2Fe-2S]-[ferredoxin] + 2 S-adenosyl-L-methionine + 4 H(+) = [[Fe-S] cluster scaffold protein] + N(6)-[(R)-dihydrolipoyl]-L-lysyl-[protein] + 4 Fe(3+) + 2 hydrogen sulfide + 2 5'-deoxyadenosine + 2 L-methionine + 2 reduced [2Fe-2S]-[ferredoxin]. It functions in the pathway protein modification; protein lipoylation via endogenous pathway; protein N(6)-(lipoyl)lysine from octanoyl-[acyl-carrier-protein]: step 2/2. Catalyzes the radical-mediated insertion of two sulfur atoms into the C-6 and C-8 positions of the octanoyl moiety bound to the lipoyl domains of lipoate-dependent enzymes, thereby converting the octanoylated domains into lipoylated derivatives. The chain is Lipoyl synthase from Nitrosomonas eutropha (strain DSM 101675 / C91 / Nm57).